The sequence spans 439 residues: Probable non-inhibitory serpin-Z9 (439 aa).

Residues 12 to 44 are disordered; sequence RRPPFPAGDANHRRLSSAPAPKPEAPAEAMPPP. Positions 31–44 are enriched in pro residues; sequence APKPEAPAEAMPPP. The interval 389–413 is RCL; it reads GIEETSVSMGLGKPLPAQHFKADHP.

Belongs to the serpin family.

In Oryza sativa subsp. japonica (Rice), this protein is Probable non-inhibitory serpin-Z9.